The primary structure comprises 301 residues: Nucleotide-binding protein Rfer_1653 (301 aa).

Gly-15–Ser-22 contacts ATP. Asp-64 to Thr-67 is a GTP binding site.

The protein belongs to the RapZ-like family.

Its function is as follows. Displays ATPase and GTPase activities. In Albidiferax ferrireducens (strain ATCC BAA-621 / DSM 15236 / T118) (Rhodoferax ferrireducens), this protein is Nucleotide-binding protein Rfer_1653.